The primary structure comprises 505 residues: Calcium/calmodulin-dependent protein kinase kinase 1 (505 aa).

The interval 27-66 (HLEEAEEGPEPASNGVDPPPRARAASVIPGSASRPTPVRP) is disordered. A phosphoserine mark is found at Ser67 and Ser74. Arg78 carries the post-translational modification Asymmetric dimethylarginine. A Phosphoserine modification is found at Ser100. Residue Thr108 is modified to Phosphothreonine. The 282-residue stretch at 128-409 (YKLQSEIGKG…VSDIKLHPWV (282 aa)) folds into the Protein kinase domain. ATP-binding positions include 134–142 (IGKGAYGVV) and Lys157. The segment at 167–189 (QYGFPRRPPPRGSQAPQGGPAKQ) is RP domain. Residue Asp275 is the Proton acceptor of the active site. The interval 435–440 (KNSVKL) is autoinhibitory domain. The calmodulin-binding stretch occupies residues 438–463 (VKLIPSWTTVILVKSMLRKRSFGNPF). Residues Ser458, Ser475, and Ser492 each carry the phosphoserine modification. Residues 460-505 (GNPFEPQARREERSMSAPGNLLLKEGCGEGGKSPELPGVQEDEAAS) form a disordered region.

It belongs to the protein kinase superfamily. Ser/Thr protein kinase family. As to quaternary structure, interacts with CAMK4 and calmodulin. Post-translationally, appears to be autophosphorylated. Phosphorylated at multiple sites by PRCAKA/PKA. Phosphorylation of Ser-458 is blocked upon binding to Ca(2+)/calmodulin. May be phosphorylated by CAMK1 and CAMK4. In terms of tissue distribution, mostly expressed in the brain with higher levels in cortex and hippocampus. Lower expression levels were detected in striatum, nucleus accumbens and cerebellum (at protein level). Abundant in forebrain, weaker in cerebellum and also detected in thymus and spleen.

Its subcellular location is the cytoplasm. It localises to the nucleus. It carries out the reaction L-seryl-[protein] + ATP = O-phospho-L-seryl-[protein] + ADP + H(+). The enzyme catalyses L-threonyl-[protein] + ATP = O-phospho-L-threonyl-[protein] + ADP + H(+). Its activity is regulated as follows. Activated by Ca(2+)/calmodulin. Binding of calmodulin may relieve intrasteric autoinhibition. Partially inhibited upon phosphorylation by PRCAKA/PKA. May be regulated through phosphorylation by CAMK1 and CAMK4. Calcium/calmodulin-dependent protein kinase that belongs to a proposed calcium-triggered signaling cascade involved in a number of cellular processes. Phosphorylates CAMK1, CAMK1D, CAMK1G and CAMK4. Involved in regulating cell apoptosis. Promotes cell survival by phosphorylating AKT1/PKB that inhibits pro-apoptotic BAD/Bcl2-antagonist of cell death. The chain is Calcium/calmodulin-dependent protein kinase kinase 1 (Camkk1) from Rattus norvegicus (Rat).